A 245-amino-acid polypeptide reads, in one-letter code: Major prion protein (245 aa).

A signal peptide spans 1–22 (MANLGCWMLVVFVATWSDLGLC). Positions 23–222 (KKRPKPGGWN…ESQAYYQRGS (200 aa)) are interaction with GRB2, ERI3 and SYN1. The interval 25-102 (RPKPGGWNTG…KPSKPKTSMK (78 aa)) is disordered. 4 tandem repeats follow at residues 51 to 59 (PQGGGGWGQ), 60 to 67 (PHGGGWGQ), 68 to 75 (PHGGGWGQ), and 76 to 83 (PHGGGWGQ). Residues 51–83 (PQGGGGWGQPHGGGWGQPHGGGWGQPHGGGWGQ) form a 4 X 8 AA tandem repeats of P-H-G-G-G-W-G-Q region. Residues 52-87 (QGGGGWGQPHGGGWGQPHGGGWGQPHGGGWGQGGGT) are compositionally biased toward gly residues. Cu(2+)-binding residues include G54, G55, H61, G62, G63, H69, G70, G71, H77, G78, and G79. The segment covering 90 to 101 (QWHKPSKPKTSM) has biased composition (basic residues). A disulfide bond links C171 and C206. 2 N-linked (GlcNAc...) asparagine glycosylation sites follow: N173 and N189. S222 carries the GPI-anchor amidated serine lipid modification. The propeptide at 223–245 (SMVLFSSPPVILLISFLIFLIVG) is removed in mature form.

Belongs to the prion family. As to quaternary structure, monomer and homodimer. Has a tendency to aggregate into amyloid fibrils containing a cross-beta spine, formed by a steric zipper of superposed beta-strands. Soluble oligomers may represent an intermediate stage on the path to fibril formation. Copper binding may promote oligomerization. Interacts with GRB2, APP, ERI3/PRNPIP and SYN1. Mislocalized cytosolically exposed PrP interacts with MGRN1; this interaction alters MGRN1 subcellular location and causes lysosomal enlargement. Interacts with KIAA1191.

Its subcellular location is the cell membrane. The protein localises to the golgi apparatus. Its primary physiological function is unclear. Has cytoprotective activity against internal or environmental stresses. May play a role in neuronal development and synaptic plasticity. May be required for neuronal myelin sheath maintenance. May play a role in iron uptake and iron homeostasis. Soluble oligomers are toxic to cultured neuroblastoma cells and induce apoptosis (in vitro). Association with GPC1 (via its heparan sulfate chains) targets PRNP to lipid rafts. Also provides Cu(2+) or Zn(2+) for the ascorbate-mediated GPC1 deaminase degradation of its heparan sulfate side chains. The polypeptide is Major prion protein (PRNP) (Cercopithecus diana (Diana monkey)).